The sequence spans 122 residues: Large ribosomal subunit protein uL14 (122 aa).

It belongs to the universal ribosomal protein uL14 family. As to quaternary structure, part of the 50S ribosomal subunit. Forms a cluster with proteins L3 and L19. In the 70S ribosome, L14 and L19 interact and together make contacts with the 16S rRNA in bridges B5 and B8.

Its function is as follows. Binds to 23S rRNA. Forms part of two intersubunit bridges in the 70S ribosome. The polypeptide is Large ribosomal subunit protein uL14 (Micrococcus luteus (strain ATCC 4698 / DSM 20030 / JCM 1464 / CCM 169 / CCUG 5858 / IAM 1056 / NBRC 3333 / NCIMB 9278 / NCTC 2665 / VKM Ac-2230) (Micrococcus lysodeikticus)).